Reading from the N-terminus, the 475-residue chain is uncharacterized protein (475 aa).

2 consecutive 4Fe-4S ferredoxin-type domains span residues 303 to 333 (ASEF…GHGY) and 352 to 381 (YKDF…LSKL). [4Fe-4S] cluster is bound by residues cysteine 312, cysteine 315, cysteine 318, cysteine 322, cysteine 362, cysteine 365, cysteine 368, and cysteine 372.

Belongs to the LutB/YkgF family.

This is an uncharacterized protein from Escherichia coli (strain K12).